Consider the following 197-residue polypeptide: Adenylate kinase (197 aa).

16–21 contacts ATP; the sequence is GAGKGT. The interval 36–65 is NMP; the sequence is STGDILRDHVARGTALGQQAGPLMEAGQLV. AMP contacts are provided by residues Thr37, Arg42, 63–65, 90–93, and Gln97; these read QLV and GFPR. An LID region spans residues 131–147; sequence DRGRQAVAEGRAPRADD. Arg132 contributes to the ATP binding site. Residues 137–158 are disordered; that stretch reads VAEGRAPRADDNEETARKRQQV. The span at 141–153 shows a compositional bias: basic and acidic residues; that stretch reads RAPRADDNEETAR. Residues Arg144 and Arg155 each contribute to the AMP site. Gly183 contributes to the ATP binding site.

The protein belongs to the adenylate kinase family. As to quaternary structure, monomer.

Its subcellular location is the cytoplasm. The catalysed reaction is AMP + ATP = 2 ADP. It functions in the pathway purine metabolism; AMP biosynthesis via salvage pathway; AMP from ADP: step 1/1. In terms of biological role, catalyzes the reversible transfer of the terminal phosphate group between ATP and AMP. Plays an important role in cellular energy homeostasis and in adenine nucleotide metabolism. This chain is Adenylate kinase, found in Deinococcus radiodurans (strain ATCC 13939 / DSM 20539 / JCM 16871 / CCUG 27074 / LMG 4051 / NBRC 15346 / NCIMB 9279 / VKM B-1422 / R1).